Consider the following 177-residue polypeptide: Peptide methionine sulfoxide reductase MsrA 2 (177 aa).

The active site involves Cys-12.

The protein belongs to the MsrA Met sulfoxide reductase family.

It catalyses the reaction L-methionyl-[protein] + [thioredoxin]-disulfide + H2O = L-methionyl-(S)-S-oxide-[protein] + [thioredoxin]-dithiol. The catalysed reaction is [thioredoxin]-disulfide + L-methionine + H2O = L-methionine (S)-S-oxide + [thioredoxin]-dithiol. Its function is as follows. Has an important function as a repair enzyme for proteins that have been inactivated by oxidation. Catalyzes the reversible oxidation-reduction of methionine sulfoxide in proteins to methionine. This chain is Peptide methionine sulfoxide reductase MsrA 2 (msrA2), found in Staphylococcus aureus (strain NCTC 8325 / PS 47).